A 384-amino-acid chain; its full sequence is L-cysteine:1D-myo-inositol 2-amino-2-deoxy-alpha-D-glucopyranoside ligase (384 aa).

Zn(2+) is bound at residue Cys16. L-cysteinyl-5'-AMP-binding positions include 16 to 19 (CGIT), Thr31, and 54 to 56 (NVT). Positions 18 to 28 (ITPYDATHLGH) match the 'HIGH' region motif. The 'ERGGDP' region signature appears at 159-164 (QSGGDP). Position 199 (Trp199) interacts with L-cysteinyl-5'-AMP. Zn(2+) is bound at residue Cys203. L-cysteinyl-5'-AMP is bound at residue 221–223 (GSD). His228 lines the Zn(2+) pocket. Ile255 provides a ligand contact to L-cysteinyl-5'-AMP. The 'KMSKS' region motif lies at 261 to 265 (KMSKS).

The protein belongs to the class-I aminoacyl-tRNA synthetase family. MshC subfamily. As to quaternary structure, monomer. Zn(2+) serves as cofactor.

It catalyses the reaction 1D-myo-inositol 2-amino-2-deoxy-alpha-D-glucopyranoside + L-cysteine + ATP = 1D-myo-inositol 2-(L-cysteinylamino)-2-deoxy-alpha-D-glucopyranoside + AMP + diphosphate + H(+). In terms of biological role, catalyzes the ATP-dependent condensation of GlcN-Ins and L-cysteine to form L-Cys-GlcN-Ins. The chain is L-cysteine:1D-myo-inositol 2-amino-2-deoxy-alpha-D-glucopyranoside ligase from Mycobacterium leprae (strain Br4923).